Reading from the N-terminus, the 81-residue chain is Sulfur carrier protein TusA (81 aa).

Cys-19 (cysteine persulfide intermediate) is an active-site residue.

It belongs to the sulfur carrier protein TusA family. In terms of assembly, interacts with IscS.

The protein resides in the cytoplasm. Its pathway is tRNA modification. Sulfur carrier protein involved in sulfur trafficking in the cell. Part of a sulfur-relay system required for 2-thiolation during synthesis of 2-thiouridine of the modified wobble base 5-methylaminomethyl-2-thiouridine (mnm(5)s(2)U) in tRNA. Interacts with IscS and stimulates its cysteine desulfurase activity. Accepts an activated sulfur from IscS, which is then transferred to TusD, and thus determines the direction of sulfur flow from IscS to 2-thiouridine formation. Also appears to be involved in sulfur transfer for the biosynthesis of molybdopterin. In Klebsiella pneumoniae subsp. pneumoniae (strain ATCC 700721 / MGH 78578), this protein is Sulfur carrier protein TusA.